The sequence spans 114 residues: PDZK1-interacting protein 1 (114 aa).

The Extracellular segment spans residues Met-1 to Gln-28. A helical membrane pass occupies residues Pro-29 to Asn-51. The Cytoplasmic portion of the chain corresponds to His-52–Met-114. At Ser-85 the chain carries Phosphoserine. A disordered region spans residues Glu-94 to Met-114. The span at Glu-105–Met-114 shows a compositional bias: basic and acidic residues.

It belongs to the PDZK1-interacting protein 1/SMIM24 family. Forms a heterodimer (via N-terminal transmembrane helix) with SLC5A2/SGLT2 (via TM13); this interaction enhances SLC5A2 transporter activity. Interacts with PDZK1.

It is found in the apical cell membrane. Its function is as follows. Auxiliary protein of electrogenic Na(+)-coupled sugar symporter SLC5A2/SGLT2 and SLC5A1/SGLT1. Essential for the transporter activity of SLC5A2/SGLT2 but not SLC5A1/SGLT1. The protein is PDZK1-interacting protein 1 of Homo sapiens (Human).